The following is a 102-amino-acid chain: Small ribosomal subunit protein uS14 (102 aa).

The protein belongs to the universal ribosomal protein uS14 family. As to quaternary structure, part of the 30S ribosomal subunit. Contacts proteins S3 and S10.

Its function is as follows. Binds 16S rRNA, required for the assembly of 30S particles and may also be responsible for determining the conformation of the 16S rRNA at the A site. This chain is Small ribosomal subunit protein uS14, found in Dichelobacter nodosus (strain VCS1703A).